Here is a 324-residue protein sequence, read N- to C-terminus: Polyketide biosynthesis acyltransferase homolog BaeD (324 aa).

The active site involves serine 99.

It is found in the cytoplasm. Its pathway is antibiotic biosynthesis; bacillaene biosynthesis. Probably involved in some intermediate steps for the synthesis of the antibiotic polyketide bacillaene which is involved in secondary metabolism. The protein is Polyketide biosynthesis acyltransferase homolog BaeD (baeD) of Bacillus velezensis (strain DSM 23117 / BGSC 10A6 / LMG 26770 / FZB42) (Bacillus amyloliquefaciens subsp. plantarum).